The primary structure comprises 911 residues: Transferrin-binding protein A (911 aa).

The signal sequence occupies residues 1–24 (MQQQHLFRLNILCLSLMTALPAYA). The TonB box motif lies at 38-45 (DTIQVKAK). The region spanning 51-176 (RDNEVTGLGK…LAGSVAFQTK (126 aa)) is the TBDR plug domain. Residues 187–911 (QWGIQSKTAY…NYTFSLEMKF (725 aa)) enclose the TBDR beta-barrel domain. Positions 894 to 911 (NRYAAPGRNYTFSLEMKF) match the TonB C-terminal box motif.

Belongs to the TonB-dependent receptor family. Binds both human apo- and holo-transferrin (TF), via the TF C-terminus. Forms a large complex with TF and TbpB.

It is found in the cell outer membrane. Neisseria acquires iron by extracting it from serum transferrin (TF) in its human host. Acts as a TF receptor and is required for TF utilization. Binds both apo- and holo-TF, via the TF C-terminus. The sequence is that of Transferrin-binding protein A from Neisseria meningitidis serogroup B.